A 253-amino-acid chain; its full sequence is Uracil-DNA glycosylase (253 aa).

Catalysis depends on Asp-79, which acts as the Proton acceptor.

It belongs to the uracil-DNA glycosylase (UDG) superfamily. UNG family.

It localises to the cytoplasm. The enzyme catalyses Hydrolyzes single-stranded DNA or mismatched double-stranded DNA and polynucleotides, releasing free uracil.. Its function is as follows. Excises uracil residues from the DNA which can arise as a result of misincorporation of dUMP residues by DNA polymerase or due to deamination of cytosine. The chain is Uracil-DNA glycosylase from Xylella fastidiosa (strain M23).